Here is a 238-residue protein sequence, read N- to C-terminus: MFTGIVECMGTVLENNPYDDSESGGQGVSITIGNAGSILTDCHVGDSIAVNGVCLTVTEFNNDSFKVGISPETIKRSNVASWIQGTQVNLERAVSQDVRFGGHYVQGHVDTVANIVSRRPEGNSIIFGFQLRDQEYFKYIVEKGFICIDGTSLTIIKVDPLSQGGAFYISMIKHTQDNVIMPLKKIGDEVNIEVDLTGKIIEKQILLTLENQISKKDSTLNTMISNIIEEKVRNYLNK.

Lumazine-binding repeat units follow at residues 1-103 (MFTG…FGGH) and 104-205 (YVQG…EKQI). 2,4-dihydroxypteridine-binding positions include 4–6 (GIV), 54–56 (CLT), and 68–73 (GISPET). Serine 95 carries the post-translational modification Phosphoserine. 2,4-dihydroxypteridine is bound by residues 107 to 109 (GHV), lysine 143, 152 to 154 (SLT), and 170 to 175 (SMIKHT).

Homotrimer.

The enzyme catalyses 2 6,7-dimethyl-8-(1-D-ribityl)lumazine + H(+) = 5-amino-6-(D-ribitylamino)uracil + riboflavin. It functions in the pathway cofactor biosynthesis; riboflavin biosynthesis; riboflavin from 2-hydroxy-3-oxobutyl phosphate and 5-amino-6-(D-ribitylamino)uracil: step 2/2. In terms of biological role, catalyzes the dismutation of two molecules of 6,7-dimethyl-8-ribityllumazine, resulting in the formation of riboflavin and 5-amino-6-(D-ribitylamino)uracil. The chain is Riboflavin synthase from Saccharomyces cerevisiae (strain ATCC 204508 / S288c) (Baker's yeast).